The chain runs to 173 residues: Protein tyrosine phosphatase type IVA 1 (173 aa).

A Tyrosine-protein phosphatase domain is found at Ala8 to Lys161. The cysteines at positions 49 and 104 are disulfide-linked. The active-site Proton donor is the Asp72. Residues Gly97 to Phe132 form an interaction with ATF5 region. Catalysis depends on Cys104, which acts as the Phosphocysteine intermediate. Val105–Arg110 is a phosphate binding site. Arg110 is a substrate binding site. Position 170 is a cysteine methyl ester (Cys170). The S-farnesyl cysteine moiety is linked to residue Cys170. Positions Cys171–Gln173 are cleaved as a propeptide — removed in mature form.

Belongs to the protein-tyrosine phosphatase family. In terms of assembly, homotrimer. Interacts with ATF5. Interacts with tubulin. In terms of processing, farnesylated. Farnesylation is required for membrane targeting. Unfarnesylated forms are shifted into the nucleus. As to expression, expressed in bone marrow, lymph nodes, T lymphocytes, spleen, thymus and tonsil. Overexpressed in tumor cell lines.

Its subcellular location is the cell membrane. It localises to the early endosome. It is found in the endoplasmic reticulum. The protein localises to the cytoplasm. The protein resides in the cytoskeleton. Its subcellular location is the spindle. It localises to the nucleus. It carries out the reaction O-phospho-L-tyrosyl-[protein] + H2O = L-tyrosyl-[protein] + phosphate. With respect to regulation, inhibited by sodium orthovanadate and pentamidine. Functionally, protein tyrosine phosphatase which stimulates progression from G1 into S phase during mitosis. May play a role in the development and maintenance of differentiating epithelial tissues. Enhances cell proliferation, cell motility and invasive activity, and promotes cancer metastasis. The protein is Protein tyrosine phosphatase type IVA 1 (PTP4A1) of Homo sapiens (Human).